The following is a 328-amino-acid chain: Gonadotropin-releasing hormone receptor (328 aa).

Residues M1–R38 are Extracellular-facing. Residue N18 is glycosylated (N-linked (GlcNAc...) asparagine). A helical transmembrane segment spans residues V39–L58. Residues K59–K77 are Cytoplasmic-facing. The helical transmembrane segment at V78–L97 threads the bilayer. At D98–K115 the chain is on the extracellular side. N-linked (GlcNAc...) asparagine glycosylation occurs at N102. C114 and C196 are oxidised to a cystine. Residues V116–L137 traverse the membrane as a helical segment. At D138–W164 the chain is on the cytoplasmic side. Residues L165–A184 traverse the membrane as a helical segment. The Extracellular segment spans residues D185–N212. Residues F213 to A232 traverse the membrane as a helical segment. Over K233–T281 the chain is Cytoplasmic. A helical transmembrane segment spans residues P282–V300. Residues S301–H306 are Extracellular-facing. The helical transmembrane segment at F307–F326 threads the bilayer. Topologically, residues S327–L328 are cytoplasmic.

It belongs to the G-protein coupled receptor 1 family. As to expression, pituitary gland.

The protein localises to the cell membrane. Its function is as follows. Receptor for gonadotropin releasing hormone (GnRH) that mediates the action of GnRH to stimulate the secretion of the gonadotropic hormones luteinizing hormone (LH) and follicle-stimulating hormone (FSH). This receptor mediates its action by association with G-proteins that activate a phosphatidylinositol-calcium second messenger system. The sequence is that of Gonadotropin-releasing hormone receptor (GNRHR) from Sus scrofa (Pig).